The primary structure comprises 442 residues: Putative pyrimidine permease RutG (442 aa).

Over 1-57 (MAMFGFPHWQLKSTSTESGVVAPDERLPFAQTAVMGVQHAVAMFGATVLMPILMGLD) the chain is Cytoplasmic. The helical transmembrane segment at 58 to 78 (PNLSILMSGIGTLLFFFITGG) threads the bilayer. Residue arginine 79 is a topological domain, periplasmic. A helical membrane pass occupies residues 80-100 (VPSYLGSSAAFVGVVIAATGF). Residues 101–110 (NGQGINPNIS) are Cytoplasmic-facing. The chain crosses the membrane as a helical span at residues 111 to 131 (IALGGIIACGLVYTVIGLVVM). At 132 to 140 (KIGTRWIER) the chain is on the periplasmic side. A helical membrane pass occupies residues 141-161 (LMPPVVTGAVVMAIGLNLAPI). Residues 162 to 169 (AVKSVSAS) are Cytoplasmic-facing. A helical transmembrane segment spans residues 170 to 190 (AFDSWMAVMTVLCIGLVAVFT). Residues 191–196 (RGMIQR) lie on the Periplasmic side of the membrane. A helical membrane pass occupies residues 197–217 (LLILVGLIVACLLYGVMTNVL). Residues 218–240 (GLGKAVDFTLVSHAAWFGLPHFS) are Cytoplasmic-facing. The helical transmembrane segment at 241–261 (TPAFNGQAMMLIAPVAVILVA) threads the bilayer. The Periplasmic segment spans residues 262–284 (ENLGHLKAVAGMTGRNMDPYMGR). Residues 285–305 (AFVGDGLATMLSGSVGGSGVT) traverse the membrane as a helical segment. At 306-318 (TYAENIGVMAVTK) the chain is on the cytoplasmic side. The chain crosses the membrane as a helical span at residues 319–339 (VYSTLVFVAAAVIAMLLGFSP). The Periplasmic portion of the chain corresponds to 340–347 (KFGALIHT). Residues 348–368 (IPAAVIGGASIVVFGLIAVAG) form a helical membrane-spanning segment. At 369–385 (ARIWVQNRVDLSQNGNL) the chain is on the cytoplasmic side. A run of 2 helical transmembrane segments spans residues 386-406 (IMVAVTLVLGAGDFALTLGGF) and 407-427 (TLGGIGTATFGAILLNALLSR). Residues 428-442 (KLVDVPPPEVVHQEP) lie on the Cytoplasmic side of the membrane.

Belongs to the nucleobase:cation symporter-2 (NCS2) (TC 2.A.40) family.

It localises to the cell inner membrane. Its function is as follows. May function as a proton-driven pyrimidine uptake system. The polypeptide is Putative pyrimidine permease RutG (rutG) (Escherichia coli (strain K12)).